The sequence spans 174 residues: Membrane protein NfeD2 (174 aa).

3 helical membrane-spanning segments follow: residues 16 to 36, 47 to 67, and 72 to 92; these read LIIA…FSGL, LVLS…LVLP, and LIAL…HIFV.

It belongs to the NfeD family.

Its subcellular location is the cell membrane. It is found in the membrane raft. Its function is as follows. Plays a role in assembly of FloT membrane rafts, probably recruited to rafts by FloT. The protein is Membrane protein NfeD2 of Bacillus subtilis (strain 168).